Consider the following 181-residue polypeptide: Bradykinin potentiating and C-type natriuretic peptides (181 aa).

The N-terminal stretch at 1-23 (MFVSRLAASGLLLLALLAVSLDG) is a signal peptide. A propeptide spanning residues 24–27 (KPLQ) is cleaved from the precursor. 2 positions are modified to pyrrolidone carboxylic acid: Gln-28 and Gln-31. The propeptide occupies 41 to 43 (LVV). Gln-44 carries the pyrrolidone carboxylic acid modification. Positions 50–52 (TQL) are excised as a propeptide. Gln-53 is modified (pyrrolidone carboxylic acid). The propeptide occupies 59–159 (AGGTTALREE…ARRLKGLAKK (101 aa)). The interval 74–150 (EAALDTPPAG…GGGCGGGGGA (77 aa)) is disordered. Residues 104 to 114 (SKGASATSAAS) show a composition bias toward low complexity. Residues 140 to 150 (AGGGCGGGGGA) show a composition bias toward gly residues. Cysteines 165 and 181 form a disulfide.

The protein in the N-terminal section; belongs to the bradykinin-potentiating peptide family. This sequence in the C-terminal section; belongs to the natriuretic peptide family. In terms of tissue distribution, venom gland.

Its subcellular location is the secreted. In terms of biological role, bradykinin-potentiating peptide both inhibits the activity of the angiotensin-converting enzyme (ACE) and enhances the action of bradykinin by inhibiting the peptidases that inactivate it. It acts as an indirect hypotensive agent. Synthetic Cdt1a, Cdt1b and the short hexapeptide Cdt3 are able to potentiate the hypotensive effect mediated by Bk on the blood pressure of anesthetized rats. Has a vasorelaxant activity in rat aortic strips and a diuretic potency in anesthetized rats. May act by activating natriuretic receptors (NPR1 and/or NPR2). The sequence is that of Bradykinin potentiating and C-type natriuretic peptides from Crotalus durissus terrificus (South American rattlesnake).